A 187-amino-acid chain; its full sequence is Cytochrome b-245 chaperone 1 (187 aa).

Residues 20–42 (GIRSWSLLVGILSTGLAAAYYSG) traverse the membrane as a helical segment. Positions 167 to 187 (ESPSERSQSSDSEPDGPGGQS) are disordered. A phosphoserine mark is found at Ser-168 and Ser-170.

It belongs to the CYBC1 family. In terms of assembly, interacts with CYBB; CYBC1 may act as a chaperone stabilizing Cytochrome b-245 heterodimer.

The protein localises to the endoplasmic reticulum membrane. Its function is as follows. Functions as a chaperone necessary for a stable expression of the CYBA and CYBB subunits of the cytochrome b-245 heterodimer. Controls the phagocyte respiratory burst and is essential for innate immunity. In Rattus norvegicus (Rat), this protein is Cytochrome b-245 chaperone 1.